A 529-amino-acid chain; its full sequence is Glucose-6-phosphate isomerase (529 aa).

Glutamate 322 functions as the Proton donor in the catalytic mechanism. Catalysis depends on residues histidine 351 and lysine 455.

Belongs to the GPI family.

It is found in the cytoplasm. It carries out the reaction alpha-D-glucose 6-phosphate = beta-D-fructose 6-phosphate. It functions in the pathway carbohydrate biosynthesis; gluconeogenesis. Its pathway is carbohydrate degradation; glycolysis; D-glyceraldehyde 3-phosphate and glycerone phosphate from D-glucose: step 2/4. In terms of biological role, catalyzes the reversible isomerization of glucose-6-phosphate to fructose-6-phosphate. The protein is Glucose-6-phosphate isomerase of Thermosynechococcus vestitus (strain NIES-2133 / IAM M-273 / BP-1).